Reading from the N-terminus, the 393-residue chain is Methyltransferase-like protein 22 (393 aa).

The segment at Trp-54 to Ser-87 is disordered. Ser-120 carries the post-translational modification Phosphoserine.

The protein belongs to the methyltransferase superfamily. METTL22 family. Interacts with members of the heat shock protein 90 and 70 families; these proteins probably are methylation substrates.

Its subcellular location is the nucleus. The enzyme catalyses L-lysyl-[protein] + 3 S-adenosyl-L-methionine = N(6),N(6),N(6)-trimethyl-L-lysyl-[protein] + 3 S-adenosyl-L-homocysteine + 3 H(+). Its function is as follows. Protein N-lysine methyltransferase. Trimethylates KIN at Lys-135 (in vitro). This Mus musculus (Mouse) protein is Methyltransferase-like protein 22 (Mettl22).